The primary structure comprises 185 residues: Elongation factor P (185 aa).

This sequence belongs to the elongation factor P family.

It is found in the cytoplasm. It participates in protein biosynthesis; polypeptide chain elongation. In terms of biological role, involved in peptide bond synthesis. Stimulates efficient translation and peptide-bond synthesis on native or reconstituted 70S ribosomes in vitro. Probably functions indirectly by altering the affinity of the ribosome for aminoacyl-tRNA, thus increasing their reactivity as acceptors for peptidyl transferase. In Clostridium novyi (strain NT), this protein is Elongation factor P.